The chain runs to 590 residues: Arginine--tRNA ligase (590 aa).

The 'HIGH' region motif lies at 132 to 142 (PNTNKPLHLGH).

Belongs to the class-I aminoacyl-tRNA synthetase family. In terms of assembly, monomer.

The protein localises to the cytoplasm. It catalyses the reaction tRNA(Arg) + L-arginine + ATP = L-arginyl-tRNA(Arg) + AMP + diphosphate. In Treponema denticola (strain ATCC 35405 / DSM 14222 / CIP 103919 / JCM 8153 / KCTC 15104), this protein is Arginine--tRNA ligase.